The following is a 1043-amino-acid chain: Polycomb protein Pcl (1043 aa).

Disordered stretches follow at residues 1-34 (MMNNHFHLQHDHPPQNVAHPFMQQPSTAVPSAPP), 271-302 (PDSTTTTPQTPPTTPEAMSSPGKSSPSPPLLA), 317-346 (FKTVEAAPPTPPTPPSPPPPPPAPPVAAPS), and 395-422 (KLRKLGGGSSITAGGGGASTTESTNTSP). Residues 25–34 (PSTAVPSAPP) show a composition bias toward low complexity. Positions 324 to 344 (PPTPPTPPSPPPPPPAPPVAA) are enriched in pro residues. The 56-residue stretch at 349 to 404 (VTYALQEDVFIKCNDGRFYLGTIIDQTSDQYLIRFDDQSEQWCEPDKLRKLGGGSS) folds into the Tudor domain. Over residues 399–412 (LGGGSSITAGGGGA) the composition is skewed to gly residues. PHD-type zinc fingers lie at residues 424–472 (GPMC…CAKP) and 512–560 (QIYC…VFCC). Residues 737–757 (AKKQAAQKADKHDELPLKPDL) show a composition bias toward basic and acidic residues. Disordered stretches follow at residues 737-819 (AKKQ…TSSL) and 931-985 (AKDL…PGHS). Basic residues predominate over residues 783–792 (SRKRKAFRLS). The span at 793 to 804 (KRYDNSRNHCDL) shows a compositional bias: basic and acidic residues. A phosphoserine mark is found at Ser805 and Ser806. Positions 807–819 (DENSSSSRGTSSL) are enriched in low complexity. Over residues 945–954 (THGRLLRQRP) the composition is skewed to basic residues. Residues 955–977 (QKQSPSQSRRNSTSSTATSSSSN) are compositionally biased toward low complexity.

Belongs to the Polycomblike family. Component of a form of the Esc/E(z) complex present specifically during early embryogenesis which is composed of Caf1-55, esc, E(z), Su(z)12, Pcl and HDAC1/Rpd3. This complex is distinct from the PRC1 complex, which contains many other PcG proteins like Pc, Ph, Psc, Su(z)2. The two complexes however cooperate and interact together during the first 3 hours of development to establish PcG silencing. Interacts with corto in vitro.

It is found in the nucleus. It localises to the chromosome. Functionally, polycomb group (PcG) protein. While PcG proteins are generally required to maintain the transcriptionally repressive state of homeotic genes throughout development, this protein is specifically required during the first 6 hours of embryogenesis to establish the repressed state. Component of the Esc/E(z) complex, which methylates 'Lys-9' and 'Lys-27' residues of histone H3, leading to transcriptional repression of the affected target gene. The Esc/E(z) complex is necessary but not sufficient for the repression of homeotic target genes, suggesting that the recruitment of the distinct PRC1 complex is also required. Required for the correct spatial expression of the homeotic genes of the Antennapedia and Bithorax complexes. This is Polycomb protein Pcl (Pcl) from Drosophila melanogaster (Fruit fly).